A 673-amino-acid polypeptide reads, in one-letter code: NACHT, LRR and PYD domains-containing protein 10 (673 aa).

The Pyrin domain occupies 1 to 92 (MALARANSPQ…VDYLNQVCLN (92 aa)). The 307-residue stretch at 163-469 (PIVVMQGSAG…AMSFLVKEDQ (307 aa)) folds into the NACHT domain. 169–176 (GSAGTGKT) is a binding site for ATP. Positions 578-673 (SDKKKSVSVT…DGEMIDKMNG (96 aa)) are disordered. The segment covering 584-597 (VSVTSSFSSGKVQS) has biased composition (low complexity). Over residues 633-648 (ASREKGHMEMNDKEDG) the composition is skewed to basic and acidic residues. Over residues 649 to 658 (GVEEQEDEEG) the composition is skewed to acidic residues. A compositionally biased stretch (basic and acidic residues) spans 659–673 (QTLKKDGEMIDKMNG).

This sequence belongs to the NLRP family. Oligomerizes. Interacts with PYCARD. Also interacts with CASP1 and IL1B. Interacts with NOD1 and components of the NOD1 signaling pathway including RIPK2, NR2C2/TAK1 and IKBKG/NEMO. As to expression, expressed in skin, tongue, heart, colon and several cell lines of hematopoietic and myocytic origin but not in kidney, skeletal muscle, spleen, liver, lung, thymus, brain or small intestine (at protein level).

It is found in the cytoplasm. The protein resides in the cell membrane. Its function is as follows. Inhibits autoprocessing of CASP1, CASP1-dependent IL1B secretion, PYCARD aggregation and PYCARD-mediated apoptosis but not apoptosis induced by FAS or BID. Displays anti-inflammatory activity. Required for immunity against C.albicans infection. Involved in the innate immune response by contributing to pro-inflammatory cytokine release in response to invasive bacterial infection. Contributes to T-cell-mediated inflammatory responses in the skin. Plays a role in protection against periodontitis through its involvement in induction of IL1A via ERK activation in oral epithelial cells infected with periodontal pathogens. Exhibits both ATPase and GTPase activities. This Mus musculus (Mouse) protein is NACHT, LRR and PYD domains-containing protein 10 (Nlrp10).